Reading from the N-terminus, the 132-residue chain is NADH-quinone oxidoreductase subunit A 2 (132 aa).

3 consecutive transmembrane segments (helical) span residues 9–29, 66–86, and 93–113; these read AWAFIAYVLGAVALCLVMLGL, LVAMLFVIFGIEMPFLYLWAV, and WAGFVEVALFVSLLLAGLFYL.

Belongs to the complex I subunit 3 family. In terms of assembly, NDH-1 is composed of 13 different subunits. Subunits NuoA, H, J, K, L, M, N constitute the membrane sector of the complex.

It is found in the cell inner membrane. It carries out the reaction a quinone + NADH + 5 H(+)(in) = a quinol + NAD(+) + 4 H(+)(out). In terms of biological role, NDH-1 shuttles electrons from NADH, via FMN and iron-sulfur (Fe-S) centers, to quinones in the respiratory chain. The immediate electron acceptor for the enzyme in this species is believed to be ubiquinone. Couples the redox reaction to proton translocation (for every two electrons transferred, four hydrogen ions are translocated across the cytoplasmic membrane), and thus conserves the redox energy in a proton gradient. The sequence is that of NADH-quinone oxidoreductase subunit A 2 from Pseudomonas paraeruginosa (strain DSM 24068 / PA7) (Pseudomonas aeruginosa (strain PA7)).